A 268-amino-acid polypeptide reads, in one-letter code: Undecaprenyl-diphosphatase 1 (268 aa).

Transmembrane regions (helical) follow at residues T5–S25, G43–F63, H81–H101, V107–L127, A185–F205, A214–V234, and L248–G268.

It belongs to the UppP family.

The protein resides in the cell inner membrane. It catalyses the reaction di-trans,octa-cis-undecaprenyl diphosphate + H2O = di-trans,octa-cis-undecaprenyl phosphate + phosphate + H(+). Catalyzes the dephosphorylation of undecaprenyl diphosphate (UPP). Confers resistance to bacitracin. In Mesorhizobium japonicum (strain LMG 29417 / CECT 9101 / MAFF 303099) (Mesorhizobium loti (strain MAFF 303099)), this protein is Undecaprenyl-diphosphatase 1.